The following is a 782-amino-acid chain: Translation initiation factor IF-2 (782 aa).

A disordered region spans residues 47–196 (DNAIDGTNKK…TPPKPKELPE (150 aa)). The segment covering 53–65 (TNKKAEAPKKETT) has biased composition (basic and acidic residues). Over residues 66-81 (SNENGNSKGPNKPNMT) the composition is skewed to polar residues. Composition is skewed to low complexity over residues 82–93 (NSNEKSNKPNNP) and 118–170 (NTSK…NNKG). Positions 283–452 (ERPPVVTIMG…LLVSEVEELK (170 aa)) constitute a tr-type G domain. The G1 stretch occupies residues 292–299 (GHVDHGKT). 292–299 (GHVDHGKT) provides a ligand contact to GTP. The tract at residues 317-321 (GITQH) is G2. Residues 338-341 (DTPG) are G3. Residues 338-342 (DTPGH) and 392-395 (NKID) each bind GTP. The interval 392 to 395 (NKID) is G4. The interval 428-430 (SAK) is G5.

The protein belongs to the TRAFAC class translation factor GTPase superfamily. Classic translation factor GTPase family. IF-2 subfamily.

Its subcellular location is the cytoplasm. One of the essential components for the initiation of protein synthesis. Protects formylmethionyl-tRNA from spontaneous hydrolysis and promotes its binding to the 30S ribosomal subunits. Also involved in the hydrolysis of GTP during the formation of the 70S ribosomal complex. In Listeria monocytogenes serotype 4b (strain CLIP80459), this protein is Translation initiation factor IF-2.